The primary structure comprises 524 residues: Beta-glucosidase 22 (524 aa).

The signal sequence occupies residues 1 to 24 (MALQKFPLLGLLFLITIVVSSTIA). Gln55 contributes to the a beta-D-glucoside binding site. An N-linked (GlcNAc...) asparagine glycan is attached at Asn61. A beta-D-glucoside-binding positions include His158 and 203-204 (NE). Glu204 serves as the catalytic Proton donor. A disulfide bond links Cys223 and Cys230. Residues Tyr346, Glu418, Trp468, 475–476 (EW), and Phe484 each bind a beta-D-glucoside. Catalysis depends on Glu418, which acts as the Nucleophile. Residue Asn494 is glycosylated (N-linked (GlcNAc...) asparagine). A Prevents secretion from ER motif is present at residues 521-524 (KDEL).

It belongs to the glycosyl hydrolase 1 family. Component of the PYK10 complex, at least composed of PYK10/BGLU23, BGLU21, BGLU22, JAL22, JAL23, PBP1/JAL30, PBP2/JAL31, JAL32, JAL33, JAL34, JAL35, GLL22 and GLL23. In terms of tissue distribution, expressed exclusively in roots.

It is found in the endoplasmic reticulum lumen. It catalyses the reaction Hydrolysis of terminal, non-reducing beta-D-glucosyl residues with release of beta-D-glucose.. Activated upon binding to PBP1 or PBP2. Beta-D-glucosidase active on scopolin &gt;&gt; esculin &gt;&gt; 4-MU-glucoside. No activity with DIMBOA-glucoside, pNP-glucoside, oNP-glucoside and sinigrin as substrates. The protein is Beta-glucosidase 22 of Arabidopsis thaliana (Mouse-ear cress).